The sequence spans 402 residues: Exodeoxyribonuclease 7 large subunit (402 aa).

The protein belongs to the XseA family. Heterooligomer composed of large and small subunits.

The protein resides in the cytoplasm. It catalyses the reaction Exonucleolytic cleavage in either 5'- to 3'- or 3'- to 5'-direction to yield nucleoside 5'-phosphates.. Bidirectionally degrades single-stranded DNA into large acid-insoluble oligonucleotides, which are then degraded further into small acid-soluble oligonucleotides. The protein is Exodeoxyribonuclease 7 large subunit of Moorella thermoacetica (strain ATCC 39073 / JCM 9320).